A 136-amino-acid chain; its full sequence is Histone H3.2 (136 aa).

The disordered stretch occupies residues 1–43 (MARTKQTARKSTGGKAPRKQLATKAARKSAPATGGVKKPHRFR). Position 5 is an N6-methylated lysine (Lys-5). N6-acetyllysine; alternate is present on Lys-10. Lys-10 bears the N6-methylated lysine; alternate mark. Phosphoserine is present on Ser-11. Phosphothreonine is present on Thr-12. An N6-acetyllysine modification is found at Lys-15. N6-acetyllysine; alternate is present on residues Lys-19 and Lys-24. Lys-19 and Lys-24 each carry N6-methylated lysine; alternate. Lys-28 is modified (N6-methylated lysine). The residue at position 29 (Ser-29) is a Phosphoserine. At Lys-37 the chain carries N6-methylated lysine.

The protein belongs to the histone H3 family. As to quaternary structure, the nucleosome is a histone octamer containing two molecules each of H2A, H2B, H3 and H4 assembled in one H3-H4 heterotetramer and two H2A-H2B heterodimers. The octamer wraps approximately 147 bp of DNA. In terms of processing, acetylation is generally linked to gene activation. Can be acetylated to form H3K9ac, H3K14ac, H3K18ac and H3K23ac. H3K9ac could compete with H3K9me and prevent gene silencing. H3K9ac is restricted to euchromatin. Post-translationally, methylated to form mainly H3K4me, H3K9me, H3K18me, H3K23me, H3K27me and H3K36me. H3K4me1/2/3, H3K9me3, H3K27me3 and H3K36me1/2/3 are typical marks for euchromatin, whereas heterochromatic chromocenters are enriched in H3K9me1/2 and H3K27me1/2. H2BK143ub1 is probably prerequisite for H3K4me. Can be phosphorylated to form H3S10ph, H3T11ph and H3S28ph. As to expression, expressed in bicellular pollen, root tips, shoot apices, young leaves and ovules.

The protein localises to the nucleus. It localises to the nucleolus. It is found in the chromosome. Its function is as follows. Core component of nucleosome. Nucleosomes wrap and compact DNA into chromatin, limiting DNA accessibility to the cellular machineries which require DNA as a template. Histones thereby play a central role in transcription regulation, DNA repair, DNA replication and chromosomal stability. DNA accessibility is regulated via a complex set of post-translational modifications of histones, also called histone code, and nucleosome remodeling. The protein is Histone H3.2 (YAH3) of Lilium longiflorum (Trumpet lily).